A 168-amino-acid polypeptide reads, in one-letter code: Large ribosomal subunit protein uL10 (168 aa).

The protein belongs to the universal ribosomal protein uL10 family. Part of the ribosomal stalk of the 50S ribosomal subunit. The N-terminus interacts with L11 and the large rRNA to form the base of the stalk. The C-terminus forms an elongated spine to which L12 dimers bind in a sequential fashion forming a multimeric L10(L12)X complex.

Functionally, forms part of the ribosomal stalk, playing a central role in the interaction of the ribosome with GTP-bound translation factors. This is Large ribosomal subunit protein uL10 from Acinetobacter baumannii (strain AB307-0294).